The following is a 590-amino-acid chain: V-type ATP synthase alpha chain (590 aa).

232–239 (GPFGSGKT) serves as a coordination point for ATP.

The protein belongs to the ATPase alpha/beta chains family.

It carries out the reaction ATP + H2O + 4 H(+)(in) = ADP + phosphate + 5 H(+)(out). Its function is as follows. Produces ATP from ADP in the presence of a proton gradient across the membrane. The V-type alpha chain is a catalytic subunit. This Thermoanaerobacter pseudethanolicus (strain ATCC 33223 / 39E) (Clostridium thermohydrosulfuricum) protein is V-type ATP synthase alpha chain.